A 455-amino-acid chain; its full sequence is Argininosuccinate lyase (455 aa).

This sequence belongs to the lyase 1 family. Argininosuccinate lyase subfamily.

Its subcellular location is the cytoplasm. It carries out the reaction 2-(N(omega)-L-arginino)succinate = fumarate + L-arginine. It functions in the pathway amino-acid biosynthesis; L-arginine biosynthesis; L-arginine from L-ornithine and carbamoyl phosphate: step 3/3. In Shewanella baltica (strain OS195), this protein is Argininosuccinate lyase.